The primary structure comprises 433 residues: Enolase 2 (433 aa).

Positions 34 to 56 (RGMVPSGASTGEHEAVELRDGDK) are disordered. The segment covering 44–56 (GEHEAVELRDGDK) has biased composition (basic and acidic residues). Residue Q163 coordinates (2R)-2-phosphoglycerate. E205 acts as the Proton donor in catalysis. Positions 243, 290, and 317 each coordinate Mg(2+). Positions 342, 371, 372, and 393 each coordinate (2R)-2-phosphoglycerate. K342 (proton acceptor) is an active-site residue.

This sequence belongs to the enolase family. The cofactor is Mg(2+).

The protein resides in the cytoplasm. It is found in the secreted. Its subcellular location is the cell surface. The enzyme catalyses (2R)-2-phosphoglycerate = phosphoenolpyruvate + H2O. Its pathway is carbohydrate degradation; glycolysis; pyruvate from D-glyceraldehyde 3-phosphate: step 4/5. In terms of biological role, catalyzes the reversible conversion of 2-phosphoglycerate (2-PG) into phosphoenolpyruvate (PEP). It is essential for the degradation of carbohydrates via glycolysis. This is Enolase 2 from Lactococcus lactis subsp. cremoris (strain SK11).